Reading from the N-terminus, the 609-residue chain is Vanadium chloroperoxidase (609 aa).

Positions 353, 360, 402, 403, 404, 490, and 496 each coordinate vanadate. His-404 serves as the catalytic Proton donor. The interval 569–609 (KPTPPEIQPMPQETPVQKPVGQQPVKGMWEEEQAPVVKEAP) is disordered.

It belongs to the vanadium-dependent haloperoxidase family. In terms of assembly, homotetramer. Requires vanadate as cofactor. The N-terminus is blocked.

The protein resides in the secreted. It carries out the reaction RH + Cl(-) + H2O2 = RCl + 2 H2O.. Its function is as follows. Catalyzes the oxidation of chloride in the presence of hydrogen peroxide to hypochlorous acid (ClOH), which in turn can react with a nucleophilic acceptor (RH), to form a chlorinated compound. This chain is Vanadium chloroperoxidase (CPO), found in Curvularia inaequalis (Helminthosporium inaequale).